The sequence spans 181 residues: Oligoribonuclease (181 aa).

The Exonuclease domain occupies 8–171 (LIWIDLEMTG…QDIQESIAEL (164 aa)). Y129 is a catalytic residue.

The protein belongs to the oligoribonuclease family.

It localises to the cytoplasm. Its function is as follows. 3'-to-5' exoribonuclease specific for small oligoribonucleotides. The polypeptide is Oligoribonuclease (Shewanella sp. (strain ANA-3)).